The sequence spans 206 residues: Large ribosomal subunit protein eL13y (206 aa).

The interval 182 to 206 (LERTNKRHAGARAKRAADAEKEEKK) is disordered. Residues 186 to 195 (NKRHAGARAK) show a composition bias toward basic residues. Residues 196–206 (RAADAEKEEKK) are compositionally biased toward basic and acidic residues.

Belongs to the eukaryotic ribosomal protein eL13 family.

In Brassica napus (Rape), this protein is Large ribosomal subunit protein eL13y.